The primary structure comprises 669 residues: Epithelial sodium channel subunit gamma (669 aa).

Over 1–67 (MAPPYHGDTR…VVSRGRLRKF (67 aa)) the chain is Cytoplasmic. The helical transmembrane segment at 68 to 88 (IWILLTLSAVGLILWQCAELI) threads the bilayer. The Extracellular segment spans residues 89 to 551 (MSYYTASVSV…VILLSNFGGQ (463 aa)). Intrachain disulfides connect cysteine 113–cysteine 300, cysteine 223–cysteine 231, cysteine 277–cysteine 284, cysteine 389–cysteine 474, cysteine 411–cysteine 470, cysteine 415–cysteine 466, cysteine 424–cysteine 451, and cysteine 426–cysteine 440. Residues 552-572 (LGLWMSCSMVCVIEIIEVFFI) form a helical membrane-spanning segment. The Cytoplasmic segment spans residues 573 to 669 (DSFSIVMRRR…LPDTLEGRSH (97 aa)). The tract at residues 592–619 (DRKAPRPQEPPQVNAPAKEGHDNPVCTD) is disordered.

It belongs to the amiloride-sensitive sodium channel (TC 1.A.6) family. SCNN1G subfamily. In terms of assembly, component of the heterotrimeric epithelial sodium channel (ENaC) composed of an alpha/SCNN1A, a beta/SCNN1B and a gamma/SCNN1G subunit.

It localises to the apical cell membrane. The enzyme catalyses Na(+)(in) = Na(+)(out). Its activity is regulated as follows. Originally identified and characterized by its inhibition by the diuretic drug amiloride. This is one of the three pore-forming subunits of the heterotrimeric epithelial sodium channel (ENaC), a critical regulator of sodium balance and fluid homeostasis. ENaC operates in epithelial tissues, where it mediates the electrodiffusion of sodium ions from extracellular fluid through the apical membrane of cells, with water following osmotically. The sequence is that of Epithelial sodium channel subunit gamma from Pelodiscus sinensis (Chinese softshell turtle).